Here is a 37-residue protein sequence, read N- to C-terminus: Esculentin-2B (37 aa).

C31 and C37 are disulfide-bonded.

The protein belongs to the frog skin active peptide (FSAP) family. Esculentin subfamily. In terms of tissue distribution, expressed by the skin glands.

Its subcellular location is the secreted. Functionally, shows antibacterial activity against representative Gram-negative and Gram-positive bacterial species, and hemolytic activity. The chain is Esculentin-2B from Pelophylax lessonae (Pool frog).